Reading from the N-terminus, the 217-residue chain is Large ribosomal subunit protein uL1 (217 aa).

Ser-2 is subject to N-acetylserine. A Phosphotyrosine modification is found at Tyr-11. Lys-91 and Lys-106 each carry N6-acetyllysine. Lys-118 is modified (N6-acetyllysine; alternate). Lys-118 is covalently cross-linked (Glycyl lysine isopeptide (Lys-Gly) (interchain with G-Cter in SUMO1); alternate). A Glycyl lysine isopeptide (Lys-Gly) (interchain with G-Cter in SUMO2); alternate cross-link involves residue Lys-118. A Glycyl lysine isopeptide (Lys-Gly) (interchain with G-Cter in SUMO2) cross-link involves residue Lys-161.

It belongs to the universal ribosomal protein uL1 family. Component of the large ribosomal subunit.

It localises to the cytoplasm. In terms of biological role, component of the large ribosomal subunit. The ribosome is a large ribonucleoprotein complex responsible for the synthesis of proteins in the cell. This chain is Large ribosomal subunit protein uL1 (RPL10A), found in Bos taurus (Bovine).